Consider the following 398-residue polypeptide: 1-deoxy-D-xylulose 5-phosphate reductoisomerase (398 aa).

T10, G11, S12, I13, G36, K37, N38, and N124 together coordinate NADPH. A 1-deoxy-D-xylulose 5-phosphate-binding site is contributed by K125. E126 serves as a coordination point for NADPH. A Mn(2+)-binding site is contributed by D150. 1-deoxy-D-xylulose 5-phosphate contacts are provided by S151, E152, S186, and H209. A Mn(2+)-binding site is contributed by E152. G215 is a binding site for NADPH. The 1-deoxy-D-xylulose 5-phosphate site is built by S222, N227, K228, and E231. E231 serves as a coordination point for Mn(2+).

It belongs to the DXR family. In terms of assembly, homodimer. Requires Mg(2+) as cofactor. Mn(2+) is required as a cofactor. Co(2+) serves as cofactor.

It catalyses the reaction 2-C-methyl-D-erythritol 4-phosphate + NADP(+) = 1-deoxy-D-xylulose 5-phosphate + NADPH + H(+). It participates in isoprenoid biosynthesis; isopentenyl diphosphate biosynthesis via DXP pathway; isopentenyl diphosphate from 1-deoxy-D-xylulose 5-phosphate: step 1/6. Inhibited by fosmidomycin. Catalyzes the NADPH-dependent rearrangement and reduction of 1-deoxy-D-xylulose-5-phosphate (DXP) to 2-C-methyl-D-erythritol 4-phosphate (MEP). This chain is 1-deoxy-D-xylulose 5-phosphate reductoisomerase (dxr), found in Escherichia coli (strain K12).